The following is a 339-amino-acid chain: Lipoate-protein ligase A (339 aa).

The BPL/LPL catalytic domain maps to 28–211 (NPDSHTLFLW…AFREYYRDTD (184 aa)). Residues Arg70, 75 to 78 (GAVF), and Lys129 each bind ATP. Lys129 is a (R)-lipoate binding site.

Belongs to the LplA family. Monomer.

The protein localises to the cytoplasm. It carries out the reaction L-lysyl-[lipoyl-carrier protein] + (R)-lipoate + ATP = N(6)-[(R)-lipoyl]-L-lysyl-[lipoyl-carrier protein] + AMP + diphosphate + H(+). The protein operates within protein modification; protein lipoylation via exogenous pathway; protein N(6)-(lipoyl)lysine from lipoate: step 1/2. It participates in protein modification; protein lipoylation via exogenous pathway; protein N(6)-(lipoyl)lysine from lipoate: step 2/2. In terms of biological role, catalyzes both the ATP-dependent activation of exogenously supplied lipoate to lipoyl-AMP and the transfer of the activated lipoyl onto the lipoyl domains of lipoate-dependent enzymes. This chain is Lipoate-protein ligase A, found in Psychrobacter cryohalolentis (strain ATCC BAA-1226 / DSM 17306 / VKM B-2378 / K5).